We begin with the raw amino-acid sequence, 168 residues long: Thiol peroxidase (168 aa).

In terms of domain architecture, Thioredoxin spans P20–A168. Residue C62 is the Cysteine sulfenic acid (-SOH) intermediate of the active site. A disulfide bridge connects residues C62 and C96.

This sequence belongs to the peroxiredoxin family. Tpx subfamily. Homodimer.

The enzyme catalyses a hydroperoxide + [thioredoxin]-dithiol = an alcohol + [thioredoxin]-disulfide + H2O. In terms of biological role, thiol-specific peroxidase that catalyzes the reduction of hydrogen peroxide and organic hydroperoxides to water and alcohols, respectively. Plays a role in cell protection against oxidative stress by detoxifying peroxides. This is Thiol peroxidase from Chlorobaculum tepidum (strain ATCC 49652 / DSM 12025 / NBRC 103806 / TLS) (Chlorobium tepidum).